The sequence spans 880 residues: Kinesin heavy chain (880 aa).

The Kinesin motor domain maps to 4–327; it reads SIKVVCRFRP…LRFGMRAKAI (324 aa). Residues 85 to 92 and 235 to 242 each bind ATP; these read GQTGAGKS and GSEKVGKT. The interval 388-426 is disordered; it reads VSGAKAAAAQTPRPSTPSRLATESRAETPVAERSATPGI. Residues 399–408 are compositionally biased toward polar residues; that stretch reads PRPSTPSRLA. Residues 428–849 adopt a coiled-coil conformation; sequence IDKDEREEFL…QEKLTTASHR (422 aa).

Belongs to the TRAFAC class myosin-kinesin ATPase superfamily. Kinesin family. Kinesin subfamily.

It is found in the cytoplasm. It localises to the cytoskeleton. Kinesin is a microtubule-associated force-producing protein that may play a role in organelle transport. Its motor activity is directed toward the microtubule's plus end. In Botryotinia fuckeliana (Noble rot fungus), this protein is Kinesin heavy chain (klp1).